A 990-amino-acid polypeptide reads, in one-letter code: Serine/threonine-protein phosphatase 6 regulatory ankyrin repeat subunit B (990 aa).

28 ANK repeats span residues 7-36 (ADQP…DVNA), 40-69 (EKRT…RVNA), 73-102 (MWLT…DVNA), 106-135 (NWQT…SVNV), 139-168 (GGRT…NINA), 172-201 (KDRR…EVTC), 205-234 (KGYT…EIDE), 238-267 (YGNT…NVNQ), 271-301 (NGFT…DVNI), 305-334 (DGKS…EIDC), 338-367 (DGNT…DTAK), 371-400 (HNMF…EIDT), 404-433 (FGRT…DFNK), 437-466 (RGRT…NINE), 470-499 (WGRT…NAEE), 531-560 (EGYN…NMFE), 566-595 (ATKS…DLDI), 599-628 (KGRT…SVTV), 633-662 (TKRT…NPDV), 666-695 (KGQT…SVDA), 699-728 (LGCT…SILC), 732-761 (RGRT…SEED), 768-797 (QGYT…FRKF), 800-829 (NSFS…ASIV), 835-864 (KGRT…QVNA), 868-898 (AGKT…DLTL), 902-931 (DSNT…EQSL), and 938-967 (SLQT…CVLA).

In terms of assembly, protein phosphatase 6 (PP6) holoenzyme is proposed to be a heterotrimeric complex formed by the catalytic subunit, a SAPS domain-containing subunit (PP6R) and an ankyrin repeat-domain containing regulatory subunit (ARS).

Putative regulatory subunit of protein phosphatase 6 (PP6) that may be involved in the recognition of phosphoprotein substrates. The chain is Serine/threonine-protein phosphatase 6 regulatory ankyrin repeat subunit B (ANKRD44) from Gallus gallus (Chicken).